We begin with the raw amino-acid sequence, 151 residues long: uncharacterized protein (151 aa).

Residues methionine 1–alanine 24 form the signal peptide.

The protein belongs to the asfivirus EP152R family.

The protein resides in the virion. This is an uncharacterized protein from Ornithodoros (relapsing fever ticks).